The sequence spans 222 residues: Transcriptional regulatory protein BasR (222 aa).

Residues 2–116 (KILIVEDDTL…ELHARIRALL (115 aa)) enclose the Response regulatory domain. 4-aspartylphosphate is present on D51. The ompR/PhoB-type DNA-binding region spans 124–218 (ESELIVGNLT…VRGFGYMLVA (95 aa)).

In terms of assembly, homodimer. In terms of processing, phosphorylated by BasS.

Its subcellular location is the cytoplasm. Member of the two-component regulatory system BasS/BasR. BasR induces the transcription of the ugd, ais, arnBCADTEF and eptA-basRS loci, all involved in resistance to polymyxin. The protein is Transcriptional regulatory protein BasR (basR) of Escherichia coli (strain K12).